The primary structure comprises 341 residues: LIM and senescent cell antigen-like-containing domain protein 2 (341 aa).

5 consecutive LIM zinc-binding domains span residues 13 to 74 (AMCQ…LFAP), 76 to 133 (CGFC…EKAK), 138 to 195 (FICQ…KMGI), 196 to 255 (PICG…LFGD), and 256 to 315 (VCYN…FPLE). Serine 328 carries the post-translational modification Phosphoserine.

As to quaternary structure, interacts with integrin-linked protein kinase 1 (ILK) via the first LIM domain, and in competition with LIMS1. Part of the heterotrimeric IPP complex composed of integrin-linked kinase (ILK), LIMS1 or LIMS2, and PARVA. Interacts with TGFB1I1. Detected in heart, lung, kidney, liver, urinary bladder, fat, skin, skeletal muscle, uterus, large intestine and testis.

It localises to the cell junction. Its subcellular location is the focal adhesion. The protein resides in the cell membrane. Functionally, adapter protein in a cytoplasmic complex linking beta-integrins to the actin cytoskeleton, bridges the complex to cell surface receptor tyrosine kinases and growth factor receptors. The protein is LIM and senescent cell antigen-like-containing domain protein 2 (Lims2) of Mus musculus (Mouse).